A 482-amino-acid polypeptide reads, in one-letter code: Exodeoxyribonuclease 7 large subunit (482 aa).

Residues 457–482 form a disordered region; sequence TLDTGGAPAKPASKPKQKPPEQGSLF.

This sequence belongs to the XseA family. Heterooligomer composed of large and small subunits.

It is found in the cytoplasm. The catalysed reaction is Exonucleolytic cleavage in either 5'- to 3'- or 3'- to 5'-direction to yield nucleoside 5'-phosphates.. Its function is as follows. Bidirectionally degrades single-stranded DNA into large acid-insoluble oligonucleotides, which are then degraded further into small acid-soluble oligonucleotides. This Ruegeria pomeroyi (strain ATCC 700808 / DSM 15171 / DSS-3) (Silicibacter pomeroyi) protein is Exodeoxyribonuclease 7 large subunit.